Consider the following 230-residue polypeptide: uncharacterized protein (230 aa).

Disordered stretches follow at residues 63-90 (TDCQTLKEEPKEQKKENNKNDENSKKTI) and 194-230 (KKLEEREQMDKHPQDRDNKDKEVNEQPDNEEQDYKEH). A compositionally biased stretch (basic and acidic residues) spans 194 to 217 (KKLEEREQMDKHPQDRDNKDKEVN).

This is an uncharacterized protein from Caenorhabditis elegans.